A 237-amino-acid chain; its full sequence is LexA repressor (237 aa).

The segment at residues 26 to 46 (FDEMKDALDLRSKSGIHRLIT) is a DNA-binding region (H-T-H motif). Active-site for autocatalytic cleavage activity residues include Ser158 and Lys196.

It belongs to the peptidase S24 family. As to quaternary structure, homodimer.

The enzyme catalyses Hydrolysis of Ala-|-Gly bond in repressor LexA.. Represses a number of genes involved in the response to DNA damage (SOS response), including recA and lexA. In the presence of single-stranded DNA, RecA interacts with LexA causing an autocatalytic cleavage which disrupts the DNA-binding part of LexA, leading to derepression of the SOS regulon and eventually DNA repair. This Rhodopseudomonas palustris (strain BisA53) protein is LexA repressor.